A 123-amino-acid chain; its full sequence is uncharacterized protein (123 aa).

Residues 5-25 (GTLVIIFAIVLILCIMLLFFY) form a helical membrane-spanning segment. The disordered stretch occupies residues 32 to 53 (KSGVLPPPIPPPTPPPPKKKYD). The segment covering 36–47 (LPPPIPPPTPPP) has biased composition (pro residues).

Belongs to the asfivirus CP123L family.

It localises to the host membrane. Its subcellular location is the virion. This is an uncharacterized protein from Ornithodoros (relapsing fever ticks).